A 389-amino-acid chain; its full sequence is Chalcone synthase 1 (389 aa).

Cys-164 is an active-site residue.

This sequence belongs to the thiolase-like superfamily. Chalcone/stilbene synthases family.

The catalysed reaction is (E)-4-coumaroyl-CoA + 3 malonyl-CoA + 3 H(+) = 2',4,4',6'-tetrahydroxychalcone + 3 CO2 + 4 CoA. It functions in the pathway secondary metabolite biosynthesis; flavonoid biosynthesis. In terms of biological role, the primary product of this enzyme is 4,2',4',6'-tetrahydroxychalcone (also termed naringenin-chalcone or chalcone) which can under specific conditions spontaneously isomerize into naringenin. The chain is Chalcone synthase 1 (CHS1) from Solanum lycopersicum (Tomato).